A 179-amino-acid polypeptide reads, in one-letter code: Tegument protein UL55 homolog (179 aa).

Belongs to the alphaherpesvirinae HHV-1 UL55 family.

The protein resides in the virion tegument. Its subcellular location is the host nucleus matrix. The chain is Tegument protein UL55 homolog from Homo sapiens (Human).